The primary structure comprises 324 residues: tRNA (cytidine(32)/guanosine(34)-2'-O)-methyltransferase (324 aa).

Glycine 53, tryptophan 55, aspartate 75, aspartate 91, and aspartate 116 together coordinate S-adenosyl-L-methionine. The active-site Proton acceptor is the lysine 156. The segment at 221 to 240 (DFNQLDGPTRVIVPFVACGD) is required for binding to WDR6.

It belongs to the class I-like SAM-binding methyltransferase superfamily. RNA methyltransferase RlmE family. TRM7 subfamily. Interacts with WDR6; the interaction is direct, and required for 2'-O-methylation of position 34 in substrate tRNAs.

It is found in the cytoplasm. It localises to the nucleus. It catalyses the reaction cytidine(32)/guanosine(34) in tRNA + 2 S-adenosyl-L-methionine = 2'-O-methylcytidine(32)/2'-O-methylguanosine(34) in tRNA + 2 S-adenosyl-L-homocysteine + 2 H(+). In terms of biological role, methylates the 2'-O-ribose of nucleotides at positions 32 and 34 of the tRNA anticodon loop of substrate tRNAs. Requisite for faithful cytoplasmic translation. Requires THADA for methylation of the cytidine at position 32 of the anticodon loop of substrate tRNAs. Requires WDR6 for methylation of the nucleotide at position 34 of the anticodon loop of substrate tRNAs. Promotes translation efficiency of the UUU codon. Plays a role in neurogenesis. Required for expression of genes involved in neurogenesis and mitochondrial translation and energy generation. Requisite for RNA-mediated gene silencing. May modify position 32 in tRNA(Arg(ACG)), tRNA(Gln(CUG)), tRNA(Leu(UAA)), tRNA(Leu(UAG)), tRNA(Leu(AAG)), tRNA(Leu(CAG)), tRNA(Phe(GAA)), tRNA(Trp(CCA)) and tRNA(Val(AAC)), and position 34 in tRNA(Phe(GAA)), tRNA(Leu(CAA)), tRNA(Leu(UAA)), tRNA(Sec(UCA)), and tRNA(Trp(CCA)). The chain is tRNA (cytidine(32)/guanosine(34)-2'-O)-methyltransferase from Mus musculus (Mouse).